The chain runs to 398 residues: Succinate--CoA ligase [ADP-forming] subunit beta (398 aa).

The ATP-grasp domain occupies 9 to 253 (KQVLAKYGVA…ESEEDPAELE (245 aa)). Residues Lys-46, 53-55 (GRG), Glu-108, Cys-111, and Glu-116 each bind ATP. Residues Asn-208 and Asp-222 each coordinate Mg(2+). Residues Asn-273 and 330–332 (GIM) contribute to the substrate site.

It belongs to the succinate/malate CoA ligase beta subunit family. In terms of assembly, heterotetramer of two alpha and two beta subunits. It depends on Mg(2+) as a cofactor.

It catalyses the reaction succinate + ATP + CoA = succinyl-CoA + ADP + phosphate. The enzyme catalyses GTP + succinate + CoA = succinyl-CoA + GDP + phosphate. The protein operates within carbohydrate metabolism; tricarboxylic acid cycle; succinate from succinyl-CoA (ligase route): step 1/1. In terms of biological role, succinyl-CoA synthetase functions in the citric acid cycle (TCA), coupling the hydrolysis of succinyl-CoA to the synthesis of either ATP or GTP and thus represents the only step of substrate-level phosphorylation in the TCA. The beta subunit provides nucleotide specificity of the enzyme and binds the substrate succinate, while the binding sites for coenzyme A and phosphate are found in the alpha subunit. This Paramagnetospirillum magneticum (strain ATCC 700264 / AMB-1) (Magnetospirillum magneticum) protein is Succinate--CoA ligase [ADP-forming] subunit beta.